The following is a 1237-amino-acid chain: GTPase activating protein BUD2 (1237 aa).

Residues 79 to 110 (GSGKSSISQPPPTTSTRRNLLRKSSNLNSSDQ) are compositionally biased toward low complexity. Positions 79-124 (GSGKSSISQPPPTTSTRRNLLRKSSNLNSSDQSHSKSSEDNEHQPP) are disordered. Residues 111–121 (SHSKSSEDNEH) show a composition bias toward basic and acidic residues. The region spanning 381–503 (NVEHPQLYDF…KQIKTTSTIM (123 aa)) is the C2 domain. The 269-residue stretch at 637–905 (NSQDQAVSNS…PEIYDYFDKL (269 aa)) folds into the Ras-GAP domain. Disordered regions lie at residues 721-762 (SIHE…ERER) and 969-1007 (NNNG…PDLD). A compositionally biased stretch (acidic residues) spans 735 to 754 (DVSDDDDDDDDNSSDDDADY). The span at 986-996 (RDMEREQDRSR) shows a compositional bias: basic and acidic residues. The stretch at 1065 to 1093 (NITLKDIQKQSTKIMNKIQELEIYLENYE) forms a coiled coil. Residues 1170–1204 (NGGMGNRNGHDVNGHNNNNNNNNNNTGDGYNETDR) are disordered. A compositionally biased stretch (low complexity) spans 1183-1199 (GHNNNNNNNNNNTGDGY).

The protein localises to the cytoplasm. It localises to the cell cortex. It is found in the cell tip. Its subcellular location is the cell septum. GTPase activating protein (GAP) for RSR1 which is involved in the polarization of yeast and hyphal cells. Directs the site of new daughter cell growth in yeast and hyphal cells. Important for hyphae to maintain linear growth and necessary for hyphal responses to directional cues in the environment (tropisms). Required for correct localization of the septin rings and stabilization of the polarisome at hyphal tips. Involved in cell adhesion. The polypeptide is GTPase activating protein BUD2 (BUD2) (Candida albicans (strain SC5314 / ATCC MYA-2876) (Yeast)).